Here is a 208-residue protein sequence, read N- to C-terminus: MPLLGDDFPQLAVSTTHGPMKLPCDLKGSWFVLFSHPADFTPVCTTEFVAFQKLMPEFEKLGVKLIGLSIDQIQSHLKWIEWIKEKLGVEITFPVIAANDSIANQIGLLHPGKGTNTVRAVFIVDPNGKVRLVLYYPQEIGRNMEEIVRAVKALQTSDKNKVALPADWPNNGLIKDRAIIPPPPTEAEAKKRLKEYDGYDFWFCHKSL.

Positions 2–156 (PLLGDDFPQL…IVRAVKALQT (155 aa)) constitute a Thioredoxin domain. The active-site Cysteine sulfenic acid (-SOH) intermediate is the cysteine 44. Arginine 119 lines the substrate pocket.

It belongs to the peroxiredoxin family. Prx6 subfamily. As to quaternary structure, homodecamer. Pentamer of dimers that assemble into a ring structure.

It is found in the cytoplasm. The enzyme catalyses a hydroperoxide + [thioredoxin]-dithiol = an alcohol + [thioredoxin]-disulfide + H2O. Thiol-specific peroxidase that catalyzes the reduction of hydrogen peroxide and organic hydroperoxides to water and alcohols, respectively. Plays a role in cell protection against oxidative stress by detoxifying peroxides. This Treponema denticola (strain ATCC 35405 / DSM 14222 / CIP 103919 / JCM 8153 / KCTC 15104) protein is Peroxiredoxin.